Reading from the N-terminus, the 117-residue chain is Ig heavy chain V region MOPC 104E (117 aa).

The 116-residue stretch at 1 to 116 (EVQLQQSGPE…WGAGTTVTVS (116 aa)) folds into the Ig-like domain. Cysteine 22 and cysteine 96 are disulfide-bonded. N-linked (GlcNAc...) (high mannose) asparagine; atypical glycosylation occurs at asparagine 55.

The chain is Ig heavy chain V region MOPC 104E from Mus musculus (Mouse).